Here is a 289-residue protein sequence, read N- to C-terminus: Protoheme IX farnesyltransferase 2 (289 aa).

9 consecutive transmembrane segments (helical) span residues 13–33 (LEIT…VPGS), 37–57 (IYDL…ASIF), 86–106 (LFFI…FILL), 109–129 (VTSA…TIIL), 137–157 (IVIG…SITG), 159–179 (VSAT…THFW), 207–227 (EFWI…PLFI), 232–252 (VGLL…YYVA), and 267–287 (AFHF…LILV).

It belongs to the UbiA prenyltransferase family. Protoheme IX farnesyltransferase subfamily.

It is found in the cell membrane. The enzyme catalyses heme b + (2E,6E)-farnesyl diphosphate + H2O = Fe(II)-heme o + diphosphate. The protein operates within porphyrin-containing compound metabolism; heme O biosynthesis; heme O from protoheme: step 1/1. In terms of biological role, converts heme B (protoheme IX) to heme O by substitution of the vinyl group on carbon 2 of heme B porphyrin ring with a hydroxyethyl farnesyl side group. The chain is Protoheme IX farnesyltransferase 2 from Picrophilus torridus (strain ATCC 700027 / DSM 9790 / JCM 10055 / NBRC 100828 / KAW 2/3).